Here is a 134-residue protein sequence, read N- to C-terminus: uncharacterized protein (134 aa).

One can recognise an HIT domain in the interval 4–107; the sequence is IFTKIINREL…PTHSLSNFSF (104 aa). The short motif at 91–95 is the Histidine triad motif element; that stretch reads HLHIH.

This is an uncharacterized protein from Mycobacterium leprae (strain TN).